Consider the following 53-residue polypeptide: Collagen alpha-1(I) chain (53 aa).

A disordered region spans residues serine 1–methionine 53. Residue lysine 7 is modified to Allysine. Position 8 is a phosphoserine (serine 8). Positions glycine 10–arginine 23 are enriched in low complexity. 6 positions are modified to 4-hydroxyproline: proline 26, proline 29, proline 32, proline 41, proline 44, and proline 47. Low complexity predominate over residues proline 34 to methionine 53.

This sequence belongs to the fibrillar collagen family. Trimers of one alpha 2(I) and two alpha 1(I) chains. Interacts with MRC2. Interacts with TRAM2. Interacts with MFAP4 in a Ca (2+)-dependent manner. Post-translationally, contains mostly 4-hydroxyproline. Proline residues at the third position of the tripeptide repeating unit (G-X-Y) are hydroxylated in some or all of the chains. In terms of processing, contains 3-hydroxyproline at a few sites. This modification occurs on the first proline residue in the sequence motif Gly-Pro-Hyp, where Hyp is 4-hydroxyproline. Lysine residues at the third position of the tripeptide repeating unit (G-X-Y) are 5-hydroxylated in some or all of the chains. Post-translationally, O-glycosylated on hydroxylated lysine residues. The O-linked glycan consists of a Glc-Gal disaccharide. As to expression, forms the fibrils of tendon, ligaments and bones. In bones the fibrils are mineralized with calcium hydroxyapatite.

It is found in the secreted. It localises to the extracellular space. The protein localises to the extracellular matrix. Functionally, type I collagen is a member of group I collagen (fibrillar forming collagen). The sequence is that of Collagen alpha-1(I) chain (COL1A1) from Oryctolagus cuniculus (Rabbit).